Reading from the N-terminus, the 107-residue chain is Phosphoribosyl-ATP pyrophosphatase (107 aa).

The protein belongs to the PRA-PH family.

The protein resides in the cytoplasm. It catalyses the reaction 1-(5-phospho-beta-D-ribosyl)-ATP + H2O = 1-(5-phospho-beta-D-ribosyl)-5'-AMP + diphosphate + H(+). It functions in the pathway amino-acid biosynthesis; L-histidine biosynthesis; L-histidine from 5-phospho-alpha-D-ribose 1-diphosphate: step 2/9. The sequence is that of Phosphoribosyl-ATP pyrophosphatase from Bacillus anthracis (strain A0248).